Consider the following 214-residue polypeptide: Germin-like protein 9-3 (214 aa).

Positions 1–23 (MASSILLLVVLAVVSAPVALVMA) are cleaved as a signal peptide. N42, N60, and N69 each carry an N-linked (GlcNAc...) asparagine glycan. The Cupin type-1 domain occupies 59-202 (MNMSMPMPNA…SFKTDVPTIQ (144 aa)). Residues H104, H106, E111, and H150 each contribute to the Mn(2+) site.

This sequence belongs to the germin family. Oligomer (believed to be a pentamer but probably hexamer).

The protein localises to the secreted. The protein resides in the extracellular space. It localises to the apoplast. Its function is as follows. May play a role in plant defense. Probably has no oxalate oxidase activity even if the active site is conserved. The sequence is that of Germin-like protein 9-3 from Oryza sativa subsp. japonica (Rice).